The primary structure comprises 294 residues: Cytidine deaminase (294 aa).

CMP/dCMP-type deaminase domains follow at residues 48–168 and 186–294; these read DEDA…FGPK and LTGD…VLLG. Residue 89 to 91 coordinates substrate; that stretch reads NME. His102 is a Zn(2+) binding site. Glu104 (proton donor) is an active-site residue. Positions 129 and 132 each coordinate Zn(2+).

This sequence belongs to the cytidine and deoxycytidylate deaminase family. As to quaternary structure, homodimer. The cofactor is Zn(2+).

It carries out the reaction cytidine + H2O + H(+) = uridine + NH4(+). The catalysed reaction is 2'-deoxycytidine + H2O + H(+) = 2'-deoxyuridine + NH4(+). Its function is as follows. This enzyme scavenges exogenous and endogenous cytidine and 2'-deoxycytidine for UMP synthesis. This chain is Cytidine deaminase, found in Salmonella enteritidis PT4 (strain P125109).